An 898-amino-acid polypeptide reads, in one-letter code: Chaperone protein ClpB 1 (898 aa).

A Clp R domain is found at 6–148 (PTKFTEQAWD…ELAIKAIRGS (143 aa)). 2 repeat regions span residues 9–74 (FTEQ…TNRQ) and 85–148 (LGRS…IRGS). The interval 161–344 (EALDKYGRDL…RRFQQVYVKQ (184 aa)) is NBD1. 208-215 (GEPGVGKT) lines the ATP pocket. Residues 345 to 560 (PSVDDTISIL…IAEIVAGWTG (216 aa)) are linker. A coiled-coil region spans residues 395–536 (IDLVDEAAAR…KESKLLEIQG (142 aa)). Residues 570-781 (ERQKLLQLEG…RIDDLIIFHT (212 aa)) form an NBD2 region. Position 620–627 (620–627 (GPTGVGKT)) interacts with ATP. Positions 782–898 (LKRDELRRIV…TAVEVEVLSS (117 aa)) are C-terminal.

It belongs to the ClpA/ClpB family. Homohexamer. The oligomerization is ATP-dependent.

Its subcellular location is the cytoplasm. Part of a stress-induced multi-chaperone system, it is involved in the recovery of the cell from heat-induced damage, in cooperation with DnaK, DnaJ and GrpE. Acts before DnaK, in the processing of protein aggregates. Protein binding stimulates the ATPase activity; ATP hydrolysis unfolds the denatured protein aggregates, which probably helps expose new hydrophobic binding sites on the surface of ClpB-bound aggregates, contributing to the solubilization and refolding of denatured protein aggregates by DnaK. The protein is Chaperone protein ClpB 1 (clpB1) of Synechocystis sp. (strain ATCC 27184 / PCC 6803 / Kazusa).